We begin with the raw amino-acid sequence, 3748 residues long: Intermembrane lipid transfer protein VPS13C (3748 aa).

Residues 3–115 (LESVVADLLN…SLQDIKQKEL (113 aa)) enclose the Chorein N-terminal domain. At S132 the chain carries Phosphoserine. Position 613 is a phosphothreonine (T613). At S618 the chain carries Phosphoserine. T623 bears the Phosphothreonine mark. Phosphoserine is present on residues S736, S841, S871, and S873. Positions 876–882 (EFFDAED) match the FFAT motif. T1968 carries the phosphothreonine modification. Phosphoserine occurs at positions 1974 and 2442. Residues 2410-3304 (DYSLKDRAPF…IQQDIDALNT (895 aa)) form a required for late endosome/lysosome localization region. Positions 2760-3012 (ELSVFSPYWL…LFAWADPTGI (253 aa)) constitute an SHR-BD domain. The interval 3305-3748 (ELMESSMTDM…VKLLRPQGPS (444 aa)) is required for lipid droplet localization. Residues R3514 and R3521 each carry the omega-N-methylarginine modification. Position 3533 is an N6-acetyllysine (K3533).

It belongs to the VPS13 family.

Its subcellular location is the mitochondrion outer membrane. It localises to the lipid droplet. The protein resides in the endoplasmic reticulum membrane. The protein localises to the lysosome membrane. It is found in the late endosome membrane. Mediates the transfer of lipids between membranes at organelle contact sites. Necessary for proper mitochondrial function and maintenance of mitochondrial transmembrane potential. Involved in the regulation of PINK1/PRKN-mediated mitophagy in response to mitochondrial depolarization. In Mus musculus (Mouse), this protein is Intermembrane lipid transfer protein VPS13C.